A 357-amino-acid polypeptide reads, in one-letter code: DENN domain-containing protein 10 (357 aa).

One can recognise a uDENN domain in the interval 1-140 (MAAAEVADTQ…TKGICQSEEN (140 aa)). In terms of domain architecture, cDENN spans 165 to 299 (QFGMETVILH…PEKSESHVIQ (135 aa)). One can recognise a dDENN domain in the interval 301 to 357 (IALKTREIFTNLAPFSEVSADGEKRVLNLEALKQKRFPPATENFLYHLAAAEQMLKI).

It belongs to the DENND10 family. In terms of assembly, interacts with the coiled-coil heterodimer of CCDC22 and CCDC93; the interaction is direct. Interacts with RAB27A and RAB27B (GDP-bound forms preferentially).

It localises to the late endosome. Functionally, guanine nucleotide exchange factor (GEF) regulating homeostasis of late endocytic pathway, including endosomal positioning, maturation and secretion, possibly through activating Rab proteins such as RAB27A and RAB27B. Promotes the exchange of GDP to GTP, converting inactive GDP-bound RAB27A and RAB27B into their active GTP-bound form. The protein is DENN domain-containing protein 10 of Homo sapiens (Human).